A 758-amino-acid polypeptide reads, in one-letter code: Vitamin K-dependent gamma-carboxylase (758 aa).

Residues 1–31 (MAVSARSARSPPDSDKVQKDKAGQTSGRRQG) are disordered. Residue alanine 2 is modified to N-acetylalanine. The Cytoplasmic segment spans residues 2-60 (AVSARSARSPPDSDKVQKDKAGQTSGRRQGSRMGKLLGFEWTDVSSWGKLVTLLNRPTD). Positions 12–22 (PDSDKVQKDKA) are enriched in basic and acidic residues. Residues 61-81 (PASLAVFRFLFGLMMVLDIPQ) form a helical membrane-spanning segment. At 82 to 113 (ERGLSSLDRRYLDGLEVCRFPLLDALQPLPLD) the chain is on the lumenal side. An intrachain disulfide couples cysteine 99 to cysteine 450. A helical membrane pass occupies residues 114–134 (WMYLVYTIMFLGALGMMLGLR). Topologically, residues 135–136 (YR) are cytoplasmic. The helical transmembrane segment at 137 to 157 (ISCVLFLLPYWYVFLLDKTSW) threads the bilayer. Residues 158–292 (NNHSYLYGLL…VSYFHCMNSQ (135 aa)) are Lumenal-facing. A helical membrane pass occupies residues 293-313 (LFSIGMFPYVMLASSPLFCSP). Over 314–361 (EWPRKLVAHCPKRLQELLPLRTAPQPSASCVYKRSRAKGGQKPGLRHR) the chain is Cytoplasmic. A helical transmembrane segment spans residues 362 to 382 (LGAAFTLLYLLEQLFLPYSHF). The Lumenal portion of the chain corresponds to 383 to 758 (LTQGYNNWTN…PNADAVHSEF (376 aa)). Positions 727–758 (PFEPVGEPSPSNTDSSNPNPSEPNADAVHSEF) are disordered. A compositionally biased stretch (low complexity) spans 734-750 (PSPSNTDSSNPNPSEPN).

Belongs to the vitamin K-dependent gamma-carboxylase family. As to quaternary structure, monomer. May interact with CALU.

It localises to the endoplasmic reticulum membrane. It catalyses the reaction 4-carboxy-L-glutamyl-[protein] + 2,3-epoxyphylloquinone + H2O + H(+) = phylloquinol + L-glutamyl-[protein] + CO2 + O2. Functionally, mediates the vitamin K-dependent carboxylation of glutamate residues to calcium-binding gamma-carboxyglutamate (Gla) residues with the concomitant conversion of the reduced hydroquinone form of vitamin K to vitamin K epoxide. Catalyzes gamma-carboxylation of various proteins, such as blood coagulation factors (F2, F7, F9 and F10), osteocalcin (BGLAP) or matrix Gla protein (MGP). This chain is Vitamin K-dependent gamma-carboxylase (GGCX), found in Delphinapterus leucas (Beluga whale).